The primary structure comprises 499 residues: Proline dehydrogenase 1, mitochondrial (499 aa).

A mitochondrion-targeting transit peptide spans 1-72 (MATRLLRTNF…LDLSDQARLF (72 aa)).

The protein belongs to the proline oxidase family. FAD is required as a cofactor. In terms of tissue distribution, ubiquitous. Highest expression in pollen grains, in the stigma and in developing embryos.

It localises to the mitochondrion. The catalysed reaction is L-proline + a quinone = (S)-1-pyrroline-5-carboxylate + a quinol + H(+). It functions in the pathway amino-acid degradation; L-proline degradation into L-glutamate; L-glutamate from L-proline: step 1/2. Functionally, converts proline to delta-1-pyrroline-5-carboxylate. This chain is Proline dehydrogenase 1, mitochondrial (POX1), found in Arabidopsis thaliana (Mouse-ear cress).